The chain runs to 207 residues: Ras-related protein Rab-8B (207 aa).

10 residues coordinate GTP: Ser-17, Gly-18, Val-19, Gly-20, Lys-21, Thr-22, Cys-23, Thr-35, Ser-39, and Thr-40. Position 22 (Thr-22) interacts with Mg(2+). Short sequence motifs (switch) lie at residues 31 to 45 and 63 to 80; these read DAFN…GIDF and DTAG…YYRG. Thr-40 and Asp-63 together coordinate Mg(2+). Residue Gly-66 coordinates GTP. Thr-72 is modified (phosphothreonine). The GTP site is built by Asn-121, Lys-122, Asp-124, Ala-152, and Lys-153. Ser-180 and Ser-183 each carry phosphoserine. Cys-204 carries the post-translational modification Cysteine methyl ester. Cys-204 carries the S-geranylgeranyl cysteine lipid modification. A propeptide spans 205-207 (removed in mature form); that stretch reads LLL.

This sequence belongs to the small GTPase superfamily. Rab family. In terms of assembly, associated with actin, delta-catenin and alpha and beta tubulins. Interacts with OTOF. Interacts with PEX5R. Interacts with RAB3IP. Interacts with VIM. Interacts with CDH1. Interacts with MICALL2. Interacts with GDI1, GDI2, CHML and CHM; phosphorylation at Thr-72 disrupts these interactions. Interacts with MICAL1. Mg(2+) serves as cofactor. Post-translationally, phosphorylation of Thr-72 in the switch II region by LRRK2 prevents the association of RAB regulatory proteins, including CHM, CHML and RAB GDP dissociation inhibitors GDI1 and GDI2.

It localises to the cell membrane. It is found in the cytoplasmic vesicle. Its subcellular location is the phagosome membrane. The protein resides in the endosome membrane. The catalysed reaction is GTP + H2O = GDP + phosphate + H(+). With respect to regulation, regulated by guanine nucleotide exchange factors (GEFs) including RAB3IP/RABIN8 which promotes the exchange of bound GDP for free GTP. Regulated by GTPase activating proteins (GAPs) which increase the GTP hydrolysis activity. Inhibited by GDP dissociation inhibitors (GDIs). Functionally, the small GTPases Rab are key regulators of intracellular membrane trafficking, from the formation of transport vesicles to their fusion with membranes. Rabs cycle between an inactive GDP-bound form and an active GTP-bound form that is able to recruit to membranes different sets of downstream effectors directly responsible for vesicle formation, movement, tethering and fusion. RAB8B may be involved in polarized vesicular trafficking and neurotransmitter release. May participate in cell junction dynamics in Sertoli cells. May also participate in the export of a subset of neosynthesized proteins through a Rab8-Rab10-Rab11-dependent endososomal export route. The chain is Ras-related protein Rab-8B (RAB8B) from Bos taurus (Bovine).